A 714-amino-acid polypeptide reads, in one-letter code: ATP-dependent DNA helicase DinG (714 aa).

A Helicase ATP-binding domain is found at alanine 17–threonine 294. Alanine 54–threonine 61 provides a ligand contact to ATP. 4 residues coordinate [4Fe-4S] cluster: cysteine 120, cysteine 194, cysteine 199, and cysteine 205. A DEAH box motif is present at residues aspartate 248–histidine 251. Residues histidine 517 to proline 698 form the Helicase C-terminal domain.

Belongs to the helicase family. DinG subfamily. Type 1 sub-subfamily. The cofactor is [4Fe-4S] cluster.

It carries out the reaction Couples ATP hydrolysis with the unwinding of duplex DNA at the replication fork by translocating in the 5'-3' direction. This creates two antiparallel DNA single strands (ssDNA). The leading ssDNA polymer is the template for DNA polymerase III holoenzyme which synthesizes a continuous strand.. The catalysed reaction is ATP + H2O = ADP + phosphate + H(+). DNA-dependent ATPase and 5'-3' DNA helicase. Unwinds D-loops, R-loops, forked DNA and G-quadruplex DNA. This chain is ATP-dependent DNA helicase DinG, found in Salmonella choleraesuis (strain SC-B67).